The primary structure comprises 337 residues: Heat-inducible transcription repressor HrcA (337 aa).

It belongs to the HrcA family.

Functionally, negative regulator of class I heat shock genes (grpE-dnaK-dnaJ and groELS operons). Prevents heat-shock induction of these operons. The chain is Heat-inducible transcription repressor HrcA from Nocardioides sp. (strain ATCC BAA-499 / JS614).